A 751-amino-acid polypeptide reads, in one-letter code: Photosystem I P700 chlorophyll a apoprotein A1 (751 aa).

The next 8 membrane-spanning stretches (helical) occupy residues 71 to 94 (VFSA…FHGA), 157 to 180 (LYCT…FHYH), 196 to 220 (LNHH…HVSL), 292 to 310 (IAHH…GHMY), 347 to 370 (WHAQ…HHMY), 386 to 412 (LSLF…IFMV), 434 to 456 (AIIS…LYIH), and 532 to 550 (FLVH…LILL). Positions 574 and 583 each coordinate [4Fe-4S] cluster. 2 helical membrane passes run 590–611 (HVFL…HFSW) and 665–687 (LSAY…MFLF). His676 contributes to the chlorophyll a' binding site. Chlorophyll a is bound by residues Met684 and Tyr692. Trp693 is a binding site for phylloquinone. Residues 725–745 (AVGVTHYLLGGIATTWAFFLA) traverse the membrane as a helical segment.

This sequence belongs to the PsaA/PsaB family. In terms of assembly, the PsaA/B heterodimer binds the P700 chlorophyll special pair and subsequent electron acceptors. PSI consists of a core antenna complex that captures photons, and an electron transfer chain that converts photonic excitation into a charge separation. The eukaryotic PSI reaction center is composed of at least 11 subunits. The cofactor is P700 is a chlorophyll a/chlorophyll a' dimer, A0 is one or more chlorophyll a, A1 is one or both phylloquinones and FX is a shared 4Fe-4S iron-sulfur center..

Its subcellular location is the plastid. It is found in the chloroplast thylakoid membrane. It catalyses the reaction reduced [plastocyanin] + hnu + oxidized [2Fe-2S]-[ferredoxin] = oxidized [plastocyanin] + reduced [2Fe-2S]-[ferredoxin]. PsaA and PsaB bind P700, the primary electron donor of photosystem I (PSI), as well as the electron acceptors A0, A1 and FX. PSI is a plastocyanin-ferredoxin oxidoreductase, converting photonic excitation into a charge separation, which transfers an electron from the donor P700 chlorophyll pair to the spectroscopically characterized acceptors A0, A1, FX, FA and FB in turn. Oxidized P700 is reduced on the lumenal side of the thylakoid membrane by plastocyanin. The protein is Photosystem I P700 chlorophyll a apoprotein A1 of Zea mays (Maize).